The sequence spans 256 residues: MAVGKNKRLSKGKKGLKKKVVDPFQRKEWYDIKAPTTFENRNVGKTLINKSTGLKNAVDGLKGRVVEVSLADLQGSEDHSFKKIKLRVDEVQGKNLLTNFHGFDFTSDKVRSLVRKWQSLVEANVTVKTADDYVLRIFCIAFTRRHQNQIKKTTYAQSSQLSAIRKKMVEIMQREVSNVTLAQLTSKLIPEVIGREIEKAAEGIYPLQNVHIRKVKVLKQAKFDLGALLALHGESVTEENGKKVGSEFQDVVLETV.

The residue at position 2 (Ala-2) is an N-acetylalanine; partial.

It belongs to the eukaryotic ribosomal protein eS1 family. As to quaternary structure, component of the small ribosomal subunit. Mature ribosomes consist of a small (40S) and a large (60S) subunit. The 40S subunit contains about 33 different proteins and 1 molecule of RNA (18S). The 60S subunit contains about 49 different proteins and 3 molecules of RNA (25S, 5.8S and 5S).

It localises to the cytoplasm. The sequence is that of Small ribosomal subunit protein eS1 from Komagataella phaffii (strain GS115 / ATCC 20864) (Yeast).